The chain runs to 197 residues: Peptidyl-tRNA hydrolase (197 aa).

Position 18 (Tyr-18) interacts with tRNA. His-23 (proton acceptor) is an active-site residue. The tRNA site is built by Phe-69, Asn-71, and Asn-117.

The protein belongs to the PTH family. As to quaternary structure, monomer.

Its subcellular location is the cytoplasm. The enzyme catalyses an N-acyl-L-alpha-aminoacyl-tRNA + H2O = an N-acyl-L-amino acid + a tRNA + H(+). Hydrolyzes ribosome-free peptidyl-tRNAs (with 1 or more amino acids incorporated), which drop off the ribosome during protein synthesis, or as a result of ribosome stalling. In terms of biological role, catalyzes the release of premature peptidyl moieties from peptidyl-tRNA molecules trapped in stalled 50S ribosomal subunits, and thus maintains levels of free tRNAs and 50S ribosomes. The chain is Peptidyl-tRNA hydrolase from Psychromonas ingrahamii (strain DSM 17664 / CCUG 51855 / 37).